The chain runs to 579 residues: Glycine--tRNA ligase (579 aa).

Glycine is bound at residue Glu175. ATP contacts are provided by residues 207 to 209 (RNE) and 218 to 219 (RV). Glu226 is a glycine binding site. 327-328 (EC) lines the ATP pocket. Position 442 to 444 (442 to 444 (EPS)) interacts with glycine. Arg449 serves as a coordination point for ATP.

Belongs to the class-II aminoacyl-tRNA synthetase family. In terms of assembly, homodimer.

The catalysed reaction is tRNA(Gly) + glycine + ATP = glycyl-tRNA(Gly) + AMP + diphosphate. It carries out the reaction 2 ATP + H(+) = P(1),P(4)-bis(5'-adenosyl) tetraphosphate + diphosphate. In terms of biological role, catalyzes the ATP-dependent ligation of glycine to the 3'-end of its cognate tRNA, via the formation of an aminoacyl-adenylate intermediate (Gly-AMP). Also produces diadenosine tetraphosphate (Ap4A), a universal pleiotropic signaling molecule needed for cell regulation pathways, by direct condensation of 2 ATPs. Thereby, may play a special role in Ap4A homeostasis. The sequence is that of Glycine--tRNA ligase from Encephalitozoon cuniculi (strain GB-M1) (Microsporidian parasite).